The following is a 398-amino-acid chain: Protochlorophyllide reductase, chloroplastic (398 aa).

This sequence belongs to the short-chain dehydrogenases/reductases (SDR) family. POR subfamily.

The protein localises to the plastid. Its subcellular location is the chloroplast. It carries out the reaction chlorophyllide a + NADP(+) = protochlorophyllide a + NADPH + H(+). It participates in porphyrin-containing compound metabolism; chlorophyll biosynthesis. Its function is as follows. Phototransformation of protochlorophyllide (Pchlide) to chlorophyllide (Chlide). In Daucus carota (Wild carrot), this protein is Protochlorophyllide reductase, chloroplastic (POR1).